The sequence spans 436 residues: D-amino acid dehydrogenase (436 aa).

FAD is bound at residue 3 to 17 (IVVLGAGVVGVTSAY).

The protein belongs to the DadA oxidoreductase family. Requires FAD as cofactor.

The catalysed reaction is a D-alpha-amino acid + A + H2O = a 2-oxocarboxylate + AH2 + NH4(+). It participates in amino-acid degradation; D-alanine degradation; NH(3) and pyruvate from D-alanine: step 1/1. Its function is as follows. Oxidative deamination of D-amino acids. The sequence is that of D-amino acid dehydrogenase from Cereibacter sphaeroides (strain ATCC 17023 / DSM 158 / JCM 6121 / CCUG 31486 / LMG 2827 / NBRC 12203 / NCIMB 8253 / ATH 2.4.1.) (Rhodobacter sphaeroides).